We begin with the raw amino-acid sequence, 376 residues long: tRNA-specific 2-thiouridylase MnmA (376 aa).

ATP-binding positions include 10 to 17 (GMSGGVDS) and methionine 36. The interaction with target base in tRNA stretch occupies residues 96-98 (NPD). The active-site Nucleophile is cysteine 101. A disulfide bond links cysteine 101 and cysteine 198. Residue glycine 125 participates in ATP binding. The tract at residues 148–150 (KDQ) is interaction with tRNA. The Cysteine persulfide intermediate role is filled by cysteine 198. The interaction with tRNA stretch occupies residues 305-306 (RY).

Belongs to the MnmA/TRMU family.

It localises to the cytoplasm. It catalyses the reaction S-sulfanyl-L-cysteinyl-[protein] + uridine(34) in tRNA + AH2 + ATP = 2-thiouridine(34) in tRNA + L-cysteinyl-[protein] + A + AMP + diphosphate + H(+). Its function is as follows. Catalyzes the 2-thiolation of uridine at the wobble position (U34) of tRNA, leading to the formation of s(2)U34. In Protochlamydia amoebophila (strain UWE25), this protein is tRNA-specific 2-thiouridylase MnmA.